The following is a 222-amino-acid chain: Nucleoside triphosphate pyrophosphatase (222 aa).

Asp82 (proton acceptor) is an active-site residue.

Belongs to the Maf family. A divalent metal cation is required as a cofactor.

It is found in the cytoplasm. The catalysed reaction is a ribonucleoside 5'-triphosphate + H2O = a ribonucleoside 5'-phosphate + diphosphate + H(+). It catalyses the reaction a 2'-deoxyribonucleoside 5'-triphosphate + H2O = a 2'-deoxyribonucleoside 5'-phosphate + diphosphate + H(+). Its function is as follows. Nucleoside triphosphate pyrophosphatase. May have a dual role in cell division arrest and in preventing the incorporation of modified nucleotides into cellular nucleic acids. In Mycobacterium tuberculosis (strain ATCC 25177 / H37Ra), this protein is Nucleoside triphosphate pyrophosphatase.